Here is a 91-residue protein sequence, read N- to C-terminus: Large ribosomal subunit protein bL27 (91 aa).

The segment at 1–21 (MAHKKAGGSSRNGRDSESKRL) is disordered.

Belongs to the bacterial ribosomal protein bL27 family.

This chain is Large ribosomal subunit protein bL27, found in Azoarcus sp. (strain BH72).